The sequence spans 354 residues: DNA polymerase IV (354 aa).

The UmuC domain maps to Val-3–Gly-188. Positions 7 and 105 each coordinate Mg(2+). The active site involves Glu-106.

Belongs to the DNA polymerase type-Y family. In terms of assembly, monomer. Mg(2+) serves as cofactor.

The protein localises to the cytoplasm. It catalyses the reaction DNA(n) + a 2'-deoxyribonucleoside 5'-triphosphate = DNA(n+1) + diphosphate. Poorly processive, error-prone DNA polymerase involved in untargeted mutagenesis. Copies undamaged DNA at stalled replication forks, which arise in vivo from mismatched or misaligned primer ends. These misaligned primers can be extended by PolIV. Exhibits no 3'-5' exonuclease (proofreading) activity. May be involved in translesional synthesis. The polypeptide is DNA polymerase IV (Sulfolobus acidocaldarius (strain ATCC 33909 / DSM 639 / JCM 8929 / NBRC 15157 / NCIMB 11770)).